Reading from the N-terminus, the 470-residue chain is Hydroxymethylglutaryl-CoA synthase (470 aa).

The Proton donor/acceptor role is filled by glutamate 100. Catalysis depends on cysteine 134, which acts as the Acyl-thioester intermediate. Positions 134, 176, 225, 269, 278, 348, and 382 each coordinate (3S)-3-hydroxy-3-methylglutaryl-CoA. Histidine 269 (proton donor/acceptor) is an active-site residue.

It belongs to the thiolase-like superfamily. HMG-CoA synthase family.

It catalyses the reaction acetoacetyl-CoA + acetyl-CoA + H2O = (3S)-3-hydroxy-3-methylglutaryl-CoA + CoA + H(+). It functions in the pathway metabolic intermediate biosynthesis; (R)-mevalonate biosynthesis; (R)-mevalonate from acetyl-CoA: step 2/3. Its function is as follows. Hydroxymethylglutaryl-CoA synthase; part of the first module of ergosterol biosynthesis pathway that includes the early steps of the pathway, conserved across all eukaryotes, and which results in the formation of mevalonate from acetyl-coenzyme A (acetyl-CoA). This module also plays a key role in the biosynthesis of triterpenes such as ganoderic acids (GA), a group of highly oxygenated lanostane-type triterpenoids which are well recognized as a main group of unique bioactive compounds in the medicinal mushroom Ganoderma lucidum. In this module, the acetyl-CoA acetyltransferase catalyzes the formation of acetoacetyl-CoA. The hydroxymethylglutaryl-CoA synthase HMGS then condenses acetyl-CoA with acetoacetyl-CoA to form HMG-CoA. The rate-limiting step of the early module is the reduction to mevalonate by the 3-hydroxy-3-methylglutaryl-coenzyme A (HMG-CoA) reductase. This Ganoderma lucidum (Ling zhi medicinal fungus) protein is Hydroxymethylglutaryl-CoA synthase.